The chain runs to 619 residues: Dihydroxy-acid dehydratase (619 aa).

D81 provides a ligand contact to Mg(2+). C122 lines the [2Fe-2S] cluster pocket. Mg(2+)-binding residues include D123 and K124. K124 is modified (N6-carboxylysine). C195 contributes to the [2Fe-2S] cluster binding site. Position 494 (E494) interacts with Mg(2+). Catalysis depends on S520, which acts as the Proton acceptor.

Belongs to the IlvD/Edd family. Homodimer. The cofactor is [2Fe-2S] cluster. Mg(2+) is required as a cofactor.

It carries out the reaction (2R)-2,3-dihydroxy-3-methylbutanoate = 3-methyl-2-oxobutanoate + H2O. The catalysed reaction is (2R,3R)-2,3-dihydroxy-3-methylpentanoate = (S)-3-methyl-2-oxopentanoate + H2O. It functions in the pathway amino-acid biosynthesis; L-isoleucine biosynthesis; L-isoleucine from 2-oxobutanoate: step 3/4. The protein operates within amino-acid biosynthesis; L-valine biosynthesis; L-valine from pyruvate: step 3/4. Its function is as follows. Functions in the biosynthesis of branched-chain amino acids. Catalyzes the dehydration of (2R,3R)-2,3-dihydroxy-3-methylpentanoate (2,3-dihydroxy-3-methylvalerate) into 2-oxo-3-methylpentanoate (2-oxo-3-methylvalerate) and of (2R)-2,3-dihydroxy-3-methylbutanoate (2,3-dihydroxyisovalerate) into 2-oxo-3-methylbutanoate (2-oxoisovalerate), the penultimate precursor to L-isoleucine and L-valine, respectively. The sequence is that of Dihydroxy-acid dehydratase from Shewanella oneidensis (strain ATCC 700550 / JCM 31522 / CIP 106686 / LMG 19005 / NCIMB 14063 / MR-1).